The sequence spans 341 residues: Anthranilate phosphoribosyltransferase (341 aa).

5-phospho-alpha-D-ribose 1-diphosphate is bound by residues Gly-85, 88-89 (GD), Thr-93, 95-98 (NIST), 113-121 (KHGNRSASG), and Ser-125. Gly-85 provides a ligand contact to anthranilate. Residue Ser-97 participates in Mg(2+) binding. Asn-116 lines the anthranilate pocket. Arg-171 serves as a coordination point for anthranilate. Mg(2+) contacts are provided by Asp-230 and Glu-231.

It belongs to the anthranilate phosphoribosyltransferase family. Homodimer. Requires Mg(2+) as cofactor.

It carries out the reaction N-(5-phospho-beta-D-ribosyl)anthranilate + diphosphate = 5-phospho-alpha-D-ribose 1-diphosphate + anthranilate. It functions in the pathway amino-acid biosynthesis; L-tryptophan biosynthesis; L-tryptophan from chorismate: step 2/5. In terms of biological role, catalyzes the transfer of the phosphoribosyl group of 5-phosphorylribose-1-pyrophosphate (PRPP) to anthranilate to yield N-(5'-phosphoribosyl)-anthranilate (PRA). The polypeptide is Anthranilate phosphoribosyltransferase (Prochlorococcus marinus (strain SARG / CCMP1375 / SS120)).